We begin with the raw amino-acid sequence, 799 residues long: Zinc finger X-linked protein ZXDA (799 aa).

Residues 1–89 (MEIPKLLPAR…QPSGGGDDFF (89 aa)) are disordered. The span at 13 to 26 (LQGGGGGGIPAGGG) shows a compositional bias: gly residues. C2H2-type zinc fingers lie at residues 267 to 291 (YLCP…LLTH), 300 to 324 (FKCP…LQSH), 330 to 354 (FGCP…MKGH), 360 to 382 (FKCE…QRSH), 389 to 413 (YQCA…NRAH), 420 to 444 (FSCS…LRSH), 450 to 474 (FLCD…KRKH), 480 to 504 (FMCP…SITH), 510 to 534 (FVCP…SKKH), and 543 to 568 (SRCP…VKRH). The tract at residues 267 to 573 (YLCPEALCGQ…MVKRHKVGQD (307 aa)) is required for interaction with ZXDC. Residues 572-699 (QDLLAQLEAA…NMDEVSSVSV (128 aa)) are required for transcriptional activation.

The protein belongs to the ZXD family. As to quaternary structure, self-associates. Interacts with ZXDC and CIITA. In terms of tissue distribution, may be expressed in brain, heart, kidney, liver, lung, muscle and placenta.

The protein resides in the nucleus. Cooperates with CIITA to promote transcription of MHC class I and MHC class II genes. This chain is Zinc finger X-linked protein ZXDA (ZXDA), found in Homo sapiens (Human).